We begin with the raw amino-acid sequence, 1215 residues long: RNA-dependent RNA polymerase 1 (1215 aa).

Belongs to the RdRP family. In terms of assembly, cid12, hrr1 and rdp1 interact forming the RNA-directed RNA polymerase complex (RDRC). The RDRC complex interacts with the RITS complex via interaction between ago1 and hrr1. Clr4 has a role in mediating this interaction.

It is found in the cytoplasm. The protein localises to the nucleus. The protein resides in the chromosome. Its subcellular location is the telomere. It localises to the centromere. The enzyme catalyses RNA(n) + a ribonucleoside 5'-triphosphate = RNA(n+1) + diphosphate. In terms of biological role, has a role in the RNA interference (RNAi) pathway which is important for heterochromatin formation, accurate chromosome segregation, centromere cohesion and telomere function during mitosis and meiosis. Required for both post-transcriptional and transcriptional gene silencing. Required for silencing at the centromeres and for initiation of transcriptionally silent heterochromatin at the mating type locus. Promotes histone H3 'Lys-10' methylation necessary for centromere function. Required for recruitment of swi6 and cohesin to an ectopic dg repeat. A member of the RNA-directed RNA polymerase complex (RDRC) which is involved in the generation of small interfering RNAs (siRNAs) and mediates their association with the RNA-induced transcriptional silencing (RITS) complex. RITS acts as a priming complex for dsRNA synthesis at the site of non-coding centromeric RNA. Its RNA-dependent RNA polymerase activity is critical in siRNA production necessary for heterochromatin formation. This chain is RNA-dependent RNA polymerase 1 (rdp1), found in Schizosaccharomyces pombe (strain 972 / ATCC 24843) (Fission yeast).